A 236-amino-acid chain; its full sequence is UPF0502 protein Bcep1808_3727 (236 aa).

It belongs to the UPF0502 family.

This Burkholderia vietnamiensis (strain G4 / LMG 22486) (Burkholderia cepacia (strain R1808)) protein is UPF0502 protein Bcep1808_3727.